The sequence spans 1202 residues: Voltage-gated inwardly rectifying potassium channel KCNH6 (1202 aa).

Residues 1 to 405 (MGSAALPHAR…YSPFKAVWDW (405 aa)) are Cytoplasmic-facing. The PAS domain occupies 36–84 (IIYCNDGFCEMFGYSRVEVMQRPCTCDFLTGPDTTKSSIAQLTQALLGS). In terms of domain architecture, PAC spans 87–139 (CKLEILYYRKDTSCFRCLVDVVPVKNEDGVVIMFILNFEDLAQLIAKSSGRSL). Disordered regions lie at residues 203 to 243 (ENCV…LGPR) and 285 to 315 (ERRA…SDSD). Basic and acidic residues predominate over residues 213-222 (LLEKERRPSL). Residues 406 to 426 (LILLLVIYTAVFTPYSAAFLL) form a helical membrane-spanning segment. Residues 427–443 (NEEQGEEKHWNCSYSCD) are Extracellular-facing. N-linked (GlcNAc...) asparagine glycosylation is present at Asn437. A helical transmembrane segment spans residues 444–464 (PLNIIDLIVDIMFIVDIVINF). Topologically, residues 465–485 (RTTYVNINDEVVSHPGKIAIH) are cytoplasmic. A helical membrane pass occupies residues 486 to 506 (YFKGWFLIDMVAAIPFDLLIF). Topologically, residues 507 to 515 (RSGSDETTT) are extracellular. The helical; Voltage-sensor transmembrane segment at 516–536 (LIGLLKTARLLRLVRVARKLD) threads the bilayer. Residues 537–543 (RYSEYGA) are Cytoplasmic-facing. A helical membrane pass occupies residues 544-564 (AVLFLLMCTFALIAHWLACIW). The Extracellular portion of the chain corresponds to 565 to 608 (YAIGNVERPYMEHKIGWLDNLGDQIGKRYNDSDLSSGPSIKDKY). Asn594 carries N-linked (GlcNAc...) asparagine glycosylation. Positions 609-629 (VTALYFTFSSLTSVGFGNVSP) form an intramembrane region, pore-forming. Residues 621–626 (SVGFGN) carry the Selectivity filter motif. Topologically, residues 630–635 (NTNSEK) are extracellular. Residues 636–656 (IFSICVMLIGSLMYASIFGNV) form a helical membrane-spanning segment. Over 657 to 1202 (SAIIQRLYSG…HLSDPVLPGS (546 aa)) the chain is Cytoplasmic. The interval 739-839 (AFRGASKGCL…IQREDLLEVL (101 aa)) is cNMP-binding domain. 3 disordered regions span residues 912-948 (LTNP…GSPT), 1092-1112 (TPCA…PSYA), and 1140-1202 (TVYS…LPGS). Residues 928-937 (GSSTTPCSQT) are compositionally biased toward polar residues. Basic and acidic residues predominate over residues 1179-1195 (EHLEASSEHQDIQRHLS).

This sequence belongs to the potassium channel family. H (Eag) (TC 1.A.1.20) subfamily. Kv11.2/KCNH6 sub-subfamily. As to quaternary structure, the potassium channel is probably composed of a homo- or heterotetrameric complex of pore-forming alpha subunits that can associate only within their subfamily.

Its subcellular location is the cell membrane. The enzyme catalyses K(+)(in) = K(+)(out). Its function is as follows. Pore-forming (alpha) subunit of voltage-gated inwardly rectifying potassium channel. Characterized by unusual gating kinetics by producing relatively small outward currents during membrane depolarization and large inward currents during subsequent repolarization which reflect a rapid inactivation during depolarization and quick recovery from inactivation but slow deactivation (closing) during repolarization. Activates even more slowly than KCNH2. This chain is Voltage-gated inwardly rectifying potassium channel KCNH6, found in Gallus gallus (Chicken).